The chain runs to 132 residues: Large ribosomal subunit protein uL14 (132 aa).

Belongs to the universal ribosomal protein uL14 family. Part of the 50S ribosomal subunit. Forms a cluster with proteins L3 and L24e, part of which may contact the 16S rRNA in 2 intersubunit bridges.

Its function is as follows. Binds to 23S rRNA. Forms part of two intersubunit bridges in the 70S ribosome. This Methanosarcina barkeri (strain Fusaro / DSM 804) protein is Large ribosomal subunit protein uL14.